A 323-amino-acid chain; its full sequence is Protoheme IX farnesyltransferase (323 aa).

The next 8 helical transmembrane spans lie at 28 to 48 (IIPL…EGRV), 50 to 70 (LFTL…AQVM), 101 to 121 (FIFA…FVNL), 122 to 142 (LSGL…THLL), 150 to 170 (IVIG…AVTG), 178 to 198 (ILFA…ALMI), 235 to 255 (FLLV…AIIL), and 282 to 302 (FSIF…LPLT).

Belongs to the UbiA prenyltransferase family. Protoheme IX farnesyltransferase subfamily.

It is found in the cell inner membrane. It catalyses the reaction heme b + (2E,6E)-farnesyl diphosphate + H2O = Fe(II)-heme o + diphosphate. It participates in porphyrin-containing compound metabolism; heme O biosynthesis; heme O from protoheme: step 1/1. Converts heme B (protoheme IX) to heme O by substitution of the vinyl group on carbon 2 of heme B porphyrin ring with a hydroxyethyl farnesyl side group. This is Protoheme IX farnesyltransferase from Rippkaea orientalis (strain PCC 8801 / RF-1) (Cyanothece sp. (strain PCC 8801)).